Reading from the N-terminus, the 308-residue chain is 4-hydroxy-3-methylbut-2-enyl diphosphate reductase (308 aa).

Cys12 serves as a coordination point for [4Fe-4S] cluster. Positions 41 and 74 each coordinate (2E)-4-hydroxy-3-methylbut-2-enyl diphosphate. Dimethylallyl diphosphate-binding residues include His41 and His74. Isopentenyl diphosphate is bound by residues His41 and His74. A [4Fe-4S] cluster-binding site is contributed by Cys96. His124 provides a ligand contact to (2E)-4-hydroxy-3-methylbut-2-enyl diphosphate. A dimethylallyl diphosphate-binding site is contributed by His124. Residue His124 coordinates isopentenyl diphosphate. Glu126 functions as the Proton donor in the catalytic mechanism. Thr166 serves as a coordination point for (2E)-4-hydroxy-3-methylbut-2-enyl diphosphate. [4Fe-4S] cluster is bound at residue Cys196. 4 residues coordinate (2E)-4-hydroxy-3-methylbut-2-enyl diphosphate: Ser224, Ser225, Asn226, and Ser268. Positions 224, 225, 226, and 268 each coordinate dimethylallyl diphosphate. 4 residues coordinate isopentenyl diphosphate: Ser224, Ser225, Asn226, and Ser268.

This sequence belongs to the IspH family. Requires [4Fe-4S] cluster as cofactor.

It carries out the reaction isopentenyl diphosphate + 2 oxidized [2Fe-2S]-[ferredoxin] + H2O = (2E)-4-hydroxy-3-methylbut-2-enyl diphosphate + 2 reduced [2Fe-2S]-[ferredoxin] + 2 H(+). The catalysed reaction is dimethylallyl diphosphate + 2 oxidized [2Fe-2S]-[ferredoxin] + H2O = (2E)-4-hydroxy-3-methylbut-2-enyl diphosphate + 2 reduced [2Fe-2S]-[ferredoxin] + 2 H(+). Its pathway is isoprenoid biosynthesis; dimethylallyl diphosphate biosynthesis; dimethylallyl diphosphate from (2E)-4-hydroxy-3-methylbutenyl diphosphate: step 1/1. It functions in the pathway isoprenoid biosynthesis; isopentenyl diphosphate biosynthesis via DXP pathway; isopentenyl diphosphate from 1-deoxy-D-xylulose 5-phosphate: step 6/6. Functionally, catalyzes the conversion of 1-hydroxy-2-methyl-2-(E)-butenyl 4-diphosphate (HMBPP) into a mixture of isopentenyl diphosphate (IPP) and dimethylallyl diphosphate (DMAPP). Acts in the terminal step of the DOXP/MEP pathway for isoprenoid precursor biosynthesis. The protein is 4-hydroxy-3-methylbut-2-enyl diphosphate reductase of Vesicomyosocius okutanii subsp. Calyptogena okutanii (strain HA).